The primary structure comprises 403 residues: Phosphopentomutase (403 aa).

Asp-13, Asp-298, His-303, Asp-339, His-340, and His-351 together coordinate Mn(2+).

Belongs to the phosphopentomutase family. The cofactor is Mn(2+).

The protein resides in the cytoplasm. The catalysed reaction is 2-deoxy-alpha-D-ribose 1-phosphate = 2-deoxy-D-ribose 5-phosphate. It catalyses the reaction alpha-D-ribose 1-phosphate = D-ribose 5-phosphate. It participates in carbohydrate degradation; 2-deoxy-D-ribose 1-phosphate degradation; D-glyceraldehyde 3-phosphate and acetaldehyde from 2-deoxy-alpha-D-ribose 1-phosphate: step 1/2. Isomerase that catalyzes the conversion of deoxy-ribose 1-phosphate (dRib-1-P) and ribose 1-phosphate (Rib-1-P) to deoxy-ribose 5-phosphate (dRib-5-P) and ribose 5-phosphate (Rib-5-P), respectively. This Streptococcus equi subsp. zooepidemicus (strain H70) protein is Phosphopentomutase.